The following is a 336-amino-acid chain: Anthranilate phosphoribosyltransferase (336 aa).

5-phospho-alpha-D-ribose 1-diphosphate contacts are provided by residues G79, 82-83 (GD), T87, 89-92 (NIST), 107-115 (KHGNRAMSS), and S119. Residue G79 participates in anthranilate binding. S91 provides a ligand contact to Mg(2+). N110 provides a ligand contact to anthranilate. R165 contributes to the anthranilate binding site. Mg(2+) is bound by residues D225 and E226.

Belongs to the anthranilate phosphoribosyltransferase family. In terms of assembly, homodimer. Mg(2+) serves as cofactor.

It carries out the reaction N-(5-phospho-beta-D-ribosyl)anthranilate + diphosphate = 5-phospho-alpha-D-ribose 1-diphosphate + anthranilate. Its pathway is amino-acid biosynthesis; L-tryptophan biosynthesis; L-tryptophan from chorismate: step 2/5. Functionally, catalyzes the transfer of the phosphoribosyl group of 5-phosphorylribose-1-pyrophosphate (PRPP) to anthranilate to yield N-(5'-phosphoribosyl)-anthranilate (PRA). In Dictyoglomus turgidum (strain DSM 6724 / Z-1310), this protein is Anthranilate phosphoribosyltransferase.